The sequence spans 61 residues: Large ribosomal subunit protein uL30 (61 aa).

Belongs to the universal ribosomal protein uL30 family. In terms of assembly, part of the 50S ribosomal subunit.

In Francisella philomiragia subsp. philomiragia (strain ATCC 25017 / CCUG 19701 / FSC 153 / O#319-036), this protein is Large ribosomal subunit protein uL30.